The chain runs to 64 residues: Metallothionein-like protein 1 (64 aa).

Belongs to the metallothionein superfamily. Type 15 family.

Metallothioneins have a high content of cysteine residues that bind various heavy metals. This is Metallothionein-like protein 1 (MT1) from Prunus avium (Cherry).